The primary structure comprises 95 residues: uncharacterized protein (95 aa).

The N-terminal stretch at 1–21 is a signal peptide; it reads MKKITLFFTALLCLFSTSVLA.

This is an uncharacterized protein from Haemophilus influenzae (strain ATCC 51907 / DSM 11121 / KW20 / Rd).